Consider the following 75-residue polypeptide: Conotoxin Vn5.6 (75 aa).

Residues 1-19 form the signal peptide; that stretch reads MLCLPVFIILLLLASPAAP. The propeptide occupies 20–59; it reads NPLEKRIQSDLIRAALEDADMKTGEREILNIIDSISDVAK. Glutamine 60 is modified (pyrrolidone carboxylic acid).

It belongs to the conotoxin T superfamily. Contains 2 disulfide bonds that can be either 'C1-C3, C2-C4' or 'C1-C4, C2-C3', since these disulfide connectivities have been observed for conotoxins with cysteine framework V (for examples, see AC P0DQQ7 and AC P81755). Expressed by the venom duct.

Its subcellular location is the secreted. This chain is Conotoxin Vn5.6, found in Conus ventricosus (Mediterranean cone).